Reading from the N-terminus, the 310-residue chain is Probable GTP 3',8-cyclase (310 aa).

The region spanning 5-218 (KYGRSLQKLR…VNIIFELGGR (214 aa)) is the Radical SAM core domain. R14 provides a ligand contact to GTP. The [4Fe-4S] cluster site is built by C21, C25, and C28. K62 is a GTP binding site. Position 66 (G66) interacts with S-adenosyl-L-methionine. Position 91 (T91) interacts with GTP. S115 is an S-adenosyl-L-methionine binding site. K153 provides a ligand contact to GTP. [4Fe-4S] cluster contacts are provided by C251, C254, and C268.

Belongs to the radical SAM superfamily. MoaA family. [4Fe-4S] cluster serves as cofactor.

The catalysed reaction is GTP + AH2 + S-adenosyl-L-methionine = (8S)-3',8-cyclo-7,8-dihydroguanosine 5'-triphosphate + 5'-deoxyadenosine + L-methionine + A + H(+). Its pathway is cofactor biosynthesis; molybdopterin biosynthesis. Its function is as follows. Catalyzes the cyclization of GTP to (8S)-3',8-cyclo-7,8-dihydroguanosine 5'-triphosphate. This Pyrobaculum aerophilum (strain ATCC 51768 / DSM 7523 / JCM 9630 / CIP 104966 / NBRC 100827 / IM2) protein is Probable GTP 3',8-cyclase.